The sequence spans 601 residues: Glutamine--fructose-6-phosphate aminotransferase [isomerizing] (601 aa).

The active-site Nucleophile; for GATase activity is C2. A Glutamine amidotransferase type-2 domain is found at 2–218 (CGIVGYIGYD…DHEIVIVKRD (217 aa)). SIS domains are found at residues 284-423 (IIND…NHGR) and 453-591 (IATD…VDKP). K596 functions as the For Fru-6P isomerization activity in the catalytic mechanism.

In terms of assembly, homodimer.

It is found in the cytoplasm. The catalysed reaction is D-fructose 6-phosphate + L-glutamine = D-glucosamine 6-phosphate + L-glutamate. In terms of biological role, catalyzes the first step in hexosamine metabolism, converting fructose-6P into glucosamine-6P using glutamine as a nitrogen source. In Staphylococcus epidermidis (strain ATCC 35984 / DSM 28319 / BCRC 17069 / CCUG 31568 / BM 3577 / RP62A), this protein is Glutamine--fructose-6-phosphate aminotransferase [isomerizing].